The chain runs to 80 residues: Delta-actitoxin-Amc2a (80 aa).

The first 19 residues, 1–19 (MNKVLFLCLVVLCATSAFA), serve as a signal peptide directing secretion. Residues 20-30 (AEEEYVERAPV) constitute a propeptide that is removed on maturation. Intrachain disulfides connect C37-C73, C39-C65, and C55-C74. P56 is subject to Hydroxyproline.

It belongs to the sea anemone type 3 (BDS) potassium channel toxin family.

The protein resides in the secreted. Its subcellular location is the nematocyst. Functionally, neurotoxon that induces paralysis when injected into crabs. The polypeptide is Delta-actitoxin-Amc2a (Antheopsis maculata (Sea anemone)).